A 456-amino-acid chain; its full sequence is Acyl-CoA transferase FPSE_08120 (456 aa).

A mitochondrion-targeting transit peptide spans 1–33 (MARLLFSGQRLRPSFLRSYIRANPSSTPSATRA).

It belongs to the CoA-transferase III family.

The protein resides in the mitochondrion. Acyl-CoA transferase; part of the Fusarium detoxification of benzoxazolinone cluster involved in the degradation of benzoxazolinones produced by the host plant. Maize, wheat, and rye produce the 2 benzoxazinone phytoanticipins 2,4-dihy-droxy-7-methoxy-1,4-benzoxazin-3-one (DIMBOA) and 2,4-dihydroxy-1,4-benzoxazin-3-one (DIBOA) that, due to their inherent instability once released, spontaneously degrade to the more stable corresponding benzoxazolinones, 6-methoxy-2-benzoxazolinone (MBOA) and 2-benzoxazolinone (BOA), respectively. The first step in the detoxification of benzoxazolinones involves the hydrolysis of the cyclic ester bond of benzoxazolinones by the gamma-lactamase FDB1 to aminophenols. FDB1 is able to convert 2-benzoxazolinone (BOA) into 2-aminophenol (2-AP), as well as 6-methoxy-2-benzoxazolinone (MBOA) into 5-methoxy-2-aminophenol (2-AMP). The N-malonyltransferase FDB2 then metabolizes aminophenols via N-malonylation to non-toxic malonamic acids. FDB2 converts 2-AP into N-(2-hydroxyphenyl) malonamic acid (HPMA) and 2-AMP into N-(2-hydroxy-4-methoxyphenyl) malonamic acid (HMPMA). The cluster also contains 2 transcription factors (FDB3 and FPSE_08121), an aldo-keto reductase (FPSE_08125) that possibly associates with a ketone component of BOA and MBOA degradation, an esterase (FPSE_08126), an acyl-CoA transferase (FPSE_08120), a solute carrier protein (FPSE_08119) and a transmembrane transporter (FPSE_08127) proposed to shuttle metabolites of benzoxazolinone degradation. The protein is Acyl-CoA transferase FPSE_08120 of Fusarium pseudograminearum (strain CS3096) (Wheat and barley crown-rot fungus).